The chain runs to 77 residues: Liver-expressed antimicrobial peptide 2 (77 aa).

Positions 1–22 are cleaved as a signal peptide; the sequence is MWHLKLFAVLMICLLLLAQVDG. Positions 23–37 are excised as a propeptide; it reads SPIPQQSSAKRRPRR. 2 disulfides stabilise this stretch: cysteine 54/cysteine 65 and cysteine 60/cysteine 70.

It belongs to the LEAP2 family.

The protein localises to the secreted. Has an antimicrobial activity. The protein is Liver-expressed antimicrobial peptide 2 (LEAP2) of Bos taurus (Bovine).